The chain runs to 333 residues: Cap-specific mRNA (nucleoside-2'-O-)-methyltransferase (333 aa).

Tyrosine 22 serves as a coordination point for mRNA. The S-adenosyl-L-methionine site is built by glutamine 39, tyrosine 66, glycine 68, glycine 72, aspartate 95, arginine 97, valine 116, and aspartate 138. The interval 169-249 is binding to NPH-I; sequence PVASSLKWRC…NKIVRNKVVV (81 aa). The binding to Rap94 stretch occupies residues 169–333; that stretch reads PVASSLKWRC…NSKRSVRSNK (165 aa). Lysine 175 acts as the For methyltransferase activity in catalysis. MRNA-binding positions include 177 to 180, aspartate 182, 205 to 207, and glutamate 233; these read RCPF and SAE. Residues 305-333 are disordered; it reads SHEPIQRKISSKNSMSKNRNSKRSVRSNK. The segment covering 311 to 322 has biased composition (low complexity); it reads RKISSKNSMSKN. The span at 323-333 shows a compositional bias: basic residues; it reads RNSKRSVRSNK.

It belongs to the class I-like SAM-binding methyltransferase superfamily. Poxvirus/kinetoplastid 2'-O-MTase family. As to quaternary structure, interacts with poly(A) polymerase catalytic subunit OPG063. Interacts with OPG109 and OPG123; these interactions might help linking transcription to capping and polyadenylation.

It is found in the virion. The enzyme catalyses a 5'-end (N(7)-methyl 5'-triphosphoguanosine)-ribonucleoside in mRNA + S-adenosyl-L-methionine = a 5'-end (N(7)-methyl 5'-triphosphoguanosine)-(2'-O-methyl-ribonucleoside) in mRNA + S-adenosyl-L-homocysteine + H(+). Its function is as follows. Displays methyltransferase, positive regulation of the poly(A) polymerase and transcription elongation activities. Involved in the modification of both mRNA ends and in intermediate and late gene positive transcription elongation. At the mRNAs 5' end, methylates the ribose 2' OH group of the first transcribed nucleotide, thereby producing a 2'-O-methylpurine cap. At the 3' end, functions as a processivity factor which stimulates the activity of the viral poly(A) polymerase OPG063 that creates mRNA's poly(A) tail. In the presence of OPG102, OPG063 does not dissociate from the RNA allowing tail elongation to around 250 adenylates. This is Cap-specific mRNA (nucleoside-2'-O-)-methyltransferase (OPG102) from Vaccinia virus (strain Western Reserve) (VACV).